A 247-amino-acid polypeptide reads, in one-letter code: Opacity protein opA52 (247 aa).

A signal peptide is located at residue alanine 1.

This sequence belongs to the opacity porin family.

It is found in the cell outer membrane. Its function is as follows. Implicated in a number of adherence functions. OPA proteins are implicated in pathogenesis and are subject to phase variation. In Neisseria gonorrhoeae, this protein is Opacity protein opA52 (opaG).